Consider the following 211-residue polypeptide: Probable GTP-binding protein EngB (211 aa).

Residues 30–204 (EGFEVAFAGR…YTVLADWMEL (175 aa)) form the EngB-type G domain. GTP contacts are provided by residues 38 to 45 (GRSNAGKS), 64 to 68 (GRTQL), 82 to 85 (DLPG), 149 to 152 (TKAD), and 182 to 185 (LFSA). Mg(2+) is bound by residues Ser-45 and Thr-66.

This sequence belongs to the TRAFAC class TrmE-Era-EngA-EngB-Septin-like GTPase superfamily. EngB GTPase family. Mg(2+) serves as cofactor.

Functionally, necessary for normal cell division and for the maintenance of normal septation. This Pseudomonas savastanoi pv. phaseolicola (strain 1448A / Race 6) (Pseudomonas syringae pv. phaseolicola (strain 1448A / Race 6)) protein is Probable GTP-binding protein EngB.